The chain runs to 416 residues: Choline/ethanolaminephosphotransferase 1 (416 aa).

The segment at 1–20 (MSGHRSTRKRCGDSHPESPV) is disordered. Ser18 carries the post-translational modification Phosphoserine. Thr40 carries the post-translational modification Phosphothreonine. Residue Asn86 participates in CDP-choline binding. The next 2 membrane-spanning stretches (helical) occupy residues 89-108 (TIIGLSINICTTILLVFYCP) and 116-133 (LWAYIACACGLFIYQSLD). Asp133 lines the Mg(2+) pocket. A glycan (N-linked (GlcNAc...) asparagine) is linked at Asn144. Glu151 is a binding site for CDP-choline. A Mg(2+)-binding site is contributed by Asp154. Residue His155 is the Proton acceptor of the active site. Transmembrane regions (helical) follow at residues 156 to 176 (GCDSLSTVFVVLGTCIAVQLG), 180 to 199 (DWMFFCCFAGTFMFYCAHWQ), 210 to 230 (IIDVTEVQIFIIIMHLLAVIG), 246 to 267 (MKLFPALCTVAGTIFSCTNYFR), 286 to 306 (VLSPFLHIGSVITLAVMIYKK), 315 to 334 (HPCLYILTFGFVSAKITNKL), 349 to 363 (TAFIGPALLFLDQYF), and 368 to 388 (DEYIVLWIALVFSFFDLIRYC). Asp158 is a Mg(2+) binding site.

The protein belongs to the CDP-alcohol phosphatidyltransferase class-I family. As to quaternary structure, homodimer. It depends on Mg(2+) as a cofactor. Requires Mn(2+) as cofactor.

It is found in the endoplasmic reticulum membrane. The protein localises to the nucleus membrane. The enzyme catalyses CDP-ethanolamine + a 1,2-diacyl-sn-glycerol = a 1,2-diacyl-sn-glycero-3-phosphoethanolamine + CMP + H(+). The catalysed reaction is CDP-choline + a 1,2-diacyl-sn-glycerol = a 1,2-diacyl-sn-glycero-3-phosphocholine + CMP + H(+). It catalyses the reaction 1-O-alkyl-2-acyl-sn-glycerol + CDP-choline = a 1-O-alkyl-2-acyl-sn-glycero-3-phosphocholine + CMP + H(+). It carries out the reaction a 1-O-(1Z-alkenyl)-2-acyl-sn-glycerol + CDP-choline = a 1-O-(1Z-alkenyl)-2-acyl-sn-glycero-3-phosphocholine + CMP + H(+). The enzyme catalyses 1,2-dioctanoyl-sn-glycerol + CDP-choline = 1,2-dioctanoyl-sn-glycero-3-phosphocholine + CMP + H(+). The catalysed reaction is 1,2-didecanoyl-sn-glycerol + CDP-choline = 1,2-didecanoyl-sn-glycero-3-phosphocholine + CMP + H(+). It catalyses the reaction CDP-choline + 1,2-di-(9Z-octadecenoyl)-sn-glycerol = 1,2-di-(9Z-octadecenoyl)-sn-glycero-3-phosphocholine + CMP + H(+). It carries out the reaction 1-hexadecanoyl-2-(9Z-octadecenoyl)-sn-glycerol + CDP-choline = 1-hexadecanoyl-2-(9Z-octadecenoyl)-sn-glycero-3-phosphocholine + CMP + H(+). The enzyme catalyses CDP-ethanolamine + 1,2-di-(9Z-octadecenoyl)-sn-glycerol = 1,2-di-(9Z-octadecenoyl)-sn-glycero-3-phosphoethanolamine + CMP + H(+). The catalysed reaction is 1-hexadecanoyl-2-(9Z-octadecenoyl)-sn-glycerol + CDP-ethanolamine = 1-hexadecanoyl-2-(9Z-octadecenoyl)-sn-glycero-3-phosphoethanolamine + CMP + H(+). It catalyses the reaction 1-hexadecanoyl-2-(4Z,7Z,10Z,13Z,16Z,19Z-docosahexaenoyl)-sn-glycerol + CDP-choline = 1-hexadecanoyl-2-(4Z,7Z,10Z,13Z,16Z,19Z-docosahexaenoyl)-sn-glycero-3-phosphocholine + CMP + H(+). It carries out the reaction 1,2-di-(9Z-hexadecenoyl)-sn-glycerol + CDP-choline = 1,2-di-(9Z-hexadecenoyl)-sn-glycero-3-phosphocholine + CMP + H(+). The enzyme catalyses 1,2-di-(9Z-hexadecenoyl)-sn-glycerol + CDP-ethanolamine = 1,2-di-(9Z-hexadecenoyl)-sn-glycero-3-phosphoethanolamine + CMP + H(+). The catalysed reaction is 1-O-hexadecyl-2-acetyl-sn-glycerol + CDP-choline = 1-O-hexadecyl-2-acetyl-sn-glycero-3-phosphocholine + CMP + H(+). It catalyses the reaction 1-O-hexadecyl-2-(5Z,8Z,11Z,14Z-eicosatetraenoyl)-sn-glycerol + CDP-choline = 1-O-hexadecyl-2-(5Z,8Z,11Z,14Z)-eicosatetraenoyl-sn-glycero-3-phosphocholine + CMP + H(+). The protein operates within phospholipid metabolism; phosphatidylethanolamine biosynthesis; phosphatidylethanolamine from ethanolamine: step 3/3. It participates in phospholipid metabolism; phosphatidylcholine biosynthesis; phosphatidylcholine from phosphocholine: step 2/2. Functionally, catalyzes both phosphatidylcholine and phosphatidylethanolamine biosynthesis from CDP-choline and CDP-ethanolamine, respectively. Involved in protein-dependent process of phospholipid transport to distribute phosphatidyl choline to the lumenal surface. Has a higher cholinephosphotransferase activity than ethanolaminephosphotransferase activity. The polypeptide is Choline/ethanolaminephosphotransferase 1 (Rattus norvegicus (Rat)).